Reading from the N-terminus, the 956-residue chain is Calsyntenin-3 (956 aa).

The signal sequence occupies residues 1–19; that stretch reads MTLLLVSLLLASLLQISSG. Over 1 to 21 the chain is Cytoplasmic; it reads MTLLLVSLLLASLLQISSGNK. Residues 20 to 847 are Extracellular-facing; it reads NKANKHKPWI…SHRNSMVPSA (828 aa). The segment at residues 22–42 is an intramembrane region (helical); sequence ANKHKPWIEAEYQGIVMENDN. Cadherin domains follow at residues 29-145 and 146-246; these read IEAE…APVF and VERL…KPSW. Over 43-73 the chain is Cytoplasmic; that stretch reads TVLLNPPLFALDKDAPLRYAGEICGFRLHGS. Residues 74 to 94 constitute an intramembrane region (helical); the sequence is GVPFEAVILDKATGEGLIRAK. The Cytoplasmic segment spans residues 95-139; the sequence is EPVDCEAQKEHTFTIQAYDCGEGPDGTNTKKSHKATVHVRVNDVN. The segment at residues 140 to 160 is an intramembrane region (helical); sequence EFAPVFVERLYRAAVTEGKLY. Residues 161 to 248 are Cytoplasmic-facing; that stretch reads DRILRVEAID…KPTCKPSWQG (88 aa). Residues 249–269 traverse the membrane as a helical segment; sequence WNKRIEYAPGAGSLALFPGIR. Residues 270-357 are Lumenal-facing; the sequence is LETCDEPLWN…GTQAVQVPLG (88 aa). Residues Asn-299, Asn-327, Asn-347, Asn-507, and Asn-740 are each glycosylated (N-linked (GlcNAc...) asparagine). A helical membrane pass occupies residues 848–868; it reads ATLIIVVCVGFLVLMVILGLV. The Cytoplasmic segment spans residues 869-956; sequence RIHSLHRRVS…RIIESPPHRY (88 aa). A disordered region spans residues 916-956; that stretch reads QTCVAGVAGGQQEEEDSSDSEAADSPSSDERRIIESPPHRY. The segment covering 927-937 has biased composition (acidic residues); that stretch reads QEEEDSSDSEA. The segment covering 943–956 has biased composition (basic and acidic residues); sequence SDERRIIESPPHRY.

This sequence belongs to the calsyntenin family. As to quaternary structure, interacts (via cadherin domains) with both alpha and beta isoforms of neurexins (NRXN1, NRXN2 and NRXN3). Directly interacts with APBA2. Forms a tripartite complex with APBA2 and APP. Interacts with low affinity with KLC1. Interacts with SLC23A2/SVCT2. Interacts with CIDEA; inhibiting the lipid transferase activity of CIDEA. Interacts with CIDEC; inhibiting the lipid transferase activity of CIDEC. In terms of processing, proteolytically processed under normal cellular conditions. A primary zeta-cleavage generates a large extracellular (soluble) N-terminal domain (sAlc) and a short C-terminal transmembrane fragment (CTF1). A secondary cleavage catalyzed by gamma-secretase within the transmembrane domain releases the beta-Alc-beta chain in the extracellular milieu and produces an intracellular fragment (AlcICD). This processing is strongly suppressed in the tripartite complex formed with APBA2 and APP, which seems to prevent the association with gamma-secretase. Ubiquitinated: endoplasmic reticulum-localized protein is ubiquitinated and degraded by the endoplasmic reticulum-associated degradation (ERAD) pathway. Restricted to the brain (at protein level). In the cerebral cortex, found in the somas and neuropil of all layers. Expressed at highest levels in neurons of cortical layer 5 and, at lower levels, in neurons of the upper layers. Highly expressed in Purkinje cells. Also found in a few scattered interneurons throughout the granule cell layer and occasionally in neurons in the molecular layer (at protein level). In all layers, high levels in a subpopulation of presumptive GABAergic neurons (based on morphology). As to expression, expression is restricted to adipose tissue, with high expression in thermogenic adipocytes (brown adipose tissue).

Its subcellular location is the postsynaptic cell membrane. The protein resides in the endoplasmic reticulum membrane. It localises to the golgi apparatus membrane. The protein localises to the cell projection. It is found in the dendrite. Its subcellular location is the lipid droplet. In terms of biological role, postsynaptic adhesion molecule that binds to presynaptic neurexins to mediate both excitatory and inhibitory synapse formation. Promotes synapse development by acting as a cell adhesion molecule at the postsynaptic membrane, which associates with both neurexin-alpha and neurexin-beta proteins at the presynaptic membrane. Regulates the balance between excitatory and inhibitory synapses by inhibiting formation of excitatory parallel-fiber synapses and promoting formation of inhibitory synapses in the same neuron. May also be involved in ascorbate (vitamin C) uptake via its interaction with SLC23A2/SVCT2. Complex formation with APBA2 and APP, stabilizes APP metabolism and enhances APBA2-mediated suppression of beta-APP40 secretion, due to the retardation of intracellular APP maturation. Adipose-specific isoform that plays a key role in adaptive thermogenesis. Facilitates the efficient use of stored triglyceride by promoting multilocular morphology of thermogenic adipocytes: acts by inhibiting the activity of CIDEA and CIDEC on lipid droplets, thereby preventing lipid droplet fusion and facilitating lipid utilization. May also participate in adaptive thermogenesis by promoting sympathetic innervation of thermogenic adipose tissue: acts by driving secretion of neurotrophic factor S100B from brown adipocytes, stimulating neurite outgrowth from sympathetic neurons. This chain is Calsyntenin-3, found in Mus musculus (Mouse).